The following is a 147-amino-acid chain: SsrA-binding protein (147 aa).

The segment at 124-147 (KKHDKRQDIKDRDWARKQARQDFS) is disordered. Residues 128–147 (KRQDIKDRDWARKQARQDFS) show a composition bias toward basic and acidic residues.

It belongs to the SmpB family.

The protein resides in the cytoplasm. Required for rescue of stalled ribosomes mediated by trans-translation. Binds to transfer-messenger RNA (tmRNA), required for stable association of tmRNA with ribosomes. tmRNA and SmpB together mimic tRNA shape, replacing the anticodon stem-loop with SmpB. tmRNA is encoded by the ssrA gene; the 2 termini fold to resemble tRNA(Ala) and it encodes a 'tag peptide', a short internal open reading frame. During trans-translation Ala-aminoacylated tmRNA acts like a tRNA, entering the A-site of stalled ribosomes, displacing the stalled mRNA. The ribosome then switches to translate the ORF on the tmRNA; the nascent peptide is terminated with the 'tag peptide' encoded by the tmRNA and targeted for degradation. The ribosome is freed to recommence translation, which seems to be the essential function of trans-translation. In Neorickettsia sennetsu (strain ATCC VR-367 / Miyayama) (Ehrlichia sennetsu), this protein is SsrA-binding protein.